Consider the following 179-residue polypeptide: Large ribosomal subunit protein uL5 (179 aa).

Belongs to the universal ribosomal protein uL5 family. Part of the 50S ribosomal subunit; part of the 5S rRNA/L5/L18/L25 subcomplex. Contacts the 5S rRNA and the P site tRNA. Forms a bridge to the 30S subunit in the 70S ribosome.

Functionally, this is one of the proteins that bind and probably mediate the attachment of the 5S RNA into the large ribosomal subunit, where it forms part of the central protuberance. In the 70S ribosome it contacts protein S13 of the 30S subunit (bridge B1b), connecting the 2 subunits; this bridge is implicated in subunit movement. Contacts the P site tRNA; the 5S rRNA and some of its associated proteins might help stabilize positioning of ribosome-bound tRNAs. The sequence is that of Large ribosomal subunit protein uL5 from Prochlorococcus marinus (strain MIT 9303).